The chain runs to 104 residues: Protein MGF 300-3L (104 aa).

Belongs to the asfivirus MGF 300 family.

In terms of biological role, plays a role in virus cell tropism, and may be required for efficient virus replication in macrophages. The sequence is that of Protein MGF 300-3L from African swine fever virus (isolate Tick/Malawi/Lil 20-1/1983) (ASFV).